Here is a 297-residue protein sequence, read N- to C-terminus: N-acetylmuramic acid 6-phosphate etherase (297 aa).

The region spanning 55-218 (ATDALKSGGR…STGAMVKFGK (164 aa)) is the SIS domain. The Proton donor role is filled by glutamate 83. The active site involves glutamate 114.

The protein belongs to the GCKR-like family. MurNAc-6-P etherase subfamily. In terms of assembly, homodimer.

It catalyses the reaction N-acetyl-D-muramate 6-phosphate + H2O = N-acetyl-D-glucosamine 6-phosphate + (R)-lactate. Its pathway is amino-sugar metabolism; 1,6-anhydro-N-acetylmuramate degradation. The protein operates within amino-sugar metabolism; N-acetylmuramate degradation. It functions in the pathway cell wall biogenesis; peptidoglycan recycling. In terms of biological role, specifically catalyzes the cleavage of the D-lactyl ether substituent of MurNAc 6-phosphate, producing GlcNAc 6-phosphate and D-lactate. Together with AnmK, is also required for the utilization of anhydro-N-acetylmuramic acid (anhMurNAc) either imported from the medium or derived from its own cell wall murein, and thus plays a role in cell wall recycling. This is N-acetylmuramic acid 6-phosphate etherase from Enterobacter sp. (strain 638).